A 128-amino-acid polypeptide reads, in one-letter code: Protein BEX2 (128 aa).

Omega-N-methylarginine is present on arginine 50. The segment at 107-128 (SLRAVSTDPPHHDHHDEFCLMP) is disordered. The span at 115 to 128 (PPHHDHHDEFCLMP) shows a compositional bias: basic and acidic residues. The segment at 117–121 (HHDHH) is his cluster. Cysteine 125 lines the Zn(2+) pocket.

It belongs to the BEX family. In terms of assembly, interacts with LMO2, possibly leading to regulate the transcriptional activity of a DNA-binding complex containing LMO2. Interacts with OMP. Expressed in central nervous system, with high level in pituitary, cerebellum and temporal lobe. Widely expressed in breast cancer cell lines.

It is found in the cytoplasm. It localises to the nucleus. In terms of biological role, regulator of mitochondrial apoptosis and G1 cell cycle in breast cancer. Protects the breast cancer cells against mitochondrial apoptosis and this effect is mediated through the modulation of BCL2 protein family, which involves the positive regulation of anti-apoptotic member BCL2 and the negative regulation of pro-apoptotic members BAD, BAK1 and PUMA. Required for the normal cell cycle progression during G1 in breast cancer cells through the regulation of CCND1 and CDKN1A. Regulates the level of PP2A regulatory subunit B and PP2A phosphatase activity. In absence of reductive stress, acts as a pseudosubstrate for the CRL2(FEM1B) complex: associates with FEM1B via zinc, thereby preventing association between FEM1B and its substrates. The protein is Protein BEX2 (BEX2) of Homo sapiens (Human).